Here is an 85-residue protein sequence, read N- to C-terminus: Putative membrane protein insertion efficiency factor (85 aa).

This sequence belongs to the UPF0161 family.

The protein resides in the cell inner membrane. In terms of biological role, could be involved in insertion of integral membrane proteins into the membrane. This is Putative membrane protein insertion efficiency factor from Escherichia fergusonii (strain ATCC 35469 / DSM 13698 / CCUG 18766 / IAM 14443 / JCM 21226 / LMG 7866 / NBRC 102419 / NCTC 12128 / CDC 0568-73).